Reading from the N-terminus, the 845-residue chain is Leucine--tRNA ligase (845 aa).

Residues Pro-40 to His-51 carry the 'HIGH' region motif. Positions Lys-623–Ser-627 match the 'KMSKS' region motif. Lys-626 lines the ATP pocket.

Belongs to the class-I aminoacyl-tRNA synthetase family.

Its subcellular location is the cytoplasm. It catalyses the reaction tRNA(Leu) + L-leucine + ATP = L-leucyl-tRNA(Leu) + AMP + diphosphate. This is Leucine--tRNA ligase from Protochlamydia amoebophila (strain UWE25).